The chain runs to 187 residues: Transmembrane protein 212 (187 aa).

5 helical membrane passes run 11 to 31, 42 to 62, 76 to 96, 106 to 126, and 148 to 168; these read TLVTLGGLSIFSGAIAFFPVF, VWIACPIWNGALAVTAGSLVL, AVFTFVILSILGCPLHFTVAL, FYSFSGVAGTNYLGYVVTFPF, and LQVLDLCLSLILFCVSLAVFI.

The protein resides in the membrane. The chain is Transmembrane protein 212 (Tmem212) from Mus musculus (Mouse).